The sequence spans 291 residues: Phosphoribulokinase (291 aa).

Residue 12-20 (GSSGAGTTS) coordinates ATP.

It belongs to the phosphoribulokinase family. In terms of assembly, homooctamer.

The catalysed reaction is D-ribulose 5-phosphate + ATP = D-ribulose 1,5-bisphosphate + ADP + H(+). The protein operates within carbohydrate biosynthesis; Calvin cycle. This chain is Phosphoribulokinase (cbbP), found in Xanthobacter flavus.